The chain runs to 362 residues: 3-dehydroquinate synthase (362 aa).

Residues 70-75 (DGEKYK), 104-108 (GVIGD), 128-129 (TT), Lys-141, Lys-150, and 168-171 (TLNT) each bind NAD(+). Residues Glu-183, His-246, and His-263 each contribute to the Zn(2+) site.

This sequence belongs to the sugar phosphate cyclases superfamily. Dehydroquinate synthase family. The cofactor is NAD(+). Co(2+) serves as cofactor. Zn(2+) is required as a cofactor.

It is found in the cytoplasm. It carries out the reaction 7-phospho-2-dehydro-3-deoxy-D-arabino-heptonate = 3-dehydroquinate + phosphate. It participates in metabolic intermediate biosynthesis; chorismate biosynthesis; chorismate from D-erythrose 4-phosphate and phosphoenolpyruvate: step 2/7. Functionally, catalyzes the conversion of 3-deoxy-D-arabino-heptulosonate 7-phosphate (DAHP) to dehydroquinate (DHQ). This is 3-dehydroquinate synthase from Haemophilus influenzae (strain ATCC 51907 / DSM 11121 / KW20 / Rd).